A 158-amino-acid polypeptide reads, in one-letter code: Small ribosomal subunit protein uS9 (158 aa).

The protein belongs to the universal ribosomal protein uS9 family.

The polypeptide is Small ribosomal subunit protein uS9 (Brucella anthropi (strain ATCC 49188 / DSM 6882 / CCUG 24695 / JCM 21032 / LMG 3331 / NBRC 15819 / NCTC 12168 / Alc 37) (Ochrobactrum anthropi)).